Reading from the N-terminus, the 183-residue chain is TATA box-binding protein-like 1 (183 aa).

Belongs to the TBP family. In terms of assembly, binds TFIIA and TFIIB. In terms of tissue distribution, present in the brain, heart, liver and gizzard.

It is found in the cytoplasm. Its subcellular location is the nucleus. Part of a specialized transcription system that mediates the transcription of most ribosomal proteins through the 5'-TCT-3' motif which is a core promoter element at these genes. Seems to also mediate the transcription of NF1. Does not bind the TATA box. The sequence is that of TATA box-binding protein-like 1 (TBPL1) from Gallus gallus (Chicken).